The primary structure comprises 357 residues: Membrane-bound lytic murein transglycosylase C (357 aa).

An N-terminal signal peptide occupies residues 1–16 (MKKILPLVIIAPLLIS). Cys-17 carries the N-palmitoyl cysteine lipid modification. The S-diacylglycerol cysteine moiety is linked to residue Cys-17.

It belongs to the transglycosylase Slt family.

The protein localises to the cell outer membrane. The catalysed reaction is Exolytic cleavage of the (1-&gt;4)-beta-glycosidic linkage between N-acetylmuramic acid (MurNAc) and N-acetylglucosamine (GlcNAc) residues in peptidoglycan, from either the reducing or the non-reducing ends of the peptidoglycan chains, with concomitant formation of a 1,6-anhydrobond in the MurNAc residue.. In terms of biological role, murein-degrading enzyme. May play a role in recycling of muropeptides during cell elongation and/or cell division. The protein is Membrane-bound lytic murein transglycosylase C of Sodalis glossinidius (strain morsitans).